The sequence spans 166 residues: Regulatory protein RecX (166 aa).

Belongs to the RecX family.

It localises to the cytoplasm. In terms of biological role, modulates RecA activity. In Shigella boydii serotype 18 (strain CDC 3083-94 / BS512), this protein is Regulatory protein RecX.